Consider the following 278-residue polypeptide: Gasdermin-like protein het-Q1 (278 aa).

This sequence belongs to the gasdermin family. In terms of assembly, homooligomer; forms a homooligomeric ring-shaped pore complex when inserted in the membrane. In terms of processing, the precursor form is cleaved by het-Q2, generating the pore-forming protein (Gasdermin-like protein het-Q1, N-terminal).

The protein localises to the cell membrane. In terms of biological role, gasdermin-like protein involved in heterokaryon incompatibility, a process that ensures that during spontaneous vegetative cell fusion, only compatible cells from the same colony survive (non-self-recognition). In P.anserina, the het-q locus exists as 2 incompatible alleles, het-Q1 (this entry) and het-Q2 (AC P0DW09). This form constitutes the precursor of the pore-forming protein: during the allorecognition process, it is cleaved by het-Q2, releasing the N-terminal moiety (Gasdermin-like protein het-Q1, N-terminal) that binds to membranes and forms pores, triggering cell death. Its function is as follows. Pore-forming protein that causes membrane permeabilization and cell death. Released upon cleavage and maturation by het-Q2 and binds to membrane inner leaflet lipids. Homooligomerizes within the membrane and forms pores of 10-15 nanometers (nm) of inner diameter, triggering cell death. In Podospora anserina (strain S / ATCC MYA-4624 / DSM 980 / FGSC 10383) (Pleurage anserina), this protein is Gasdermin-like protein het-Q1.